Here is a 476-residue protein sequence, read N- to C-terminus: Tubulointerstitial nephritis antigen (476 aa).

Asn-38 carries N-linked (GlcNAc...) asparagine glycosylation. One can recognise an SMB domain in the interval 59–107 (NFGCCEDRDDGCVTEFYAANALCYCDKFCDRENSDCCPDYKSFCREEKE). 6 cysteine pairs are disulfide-bonded: Cys-63–Cys-70, Cys-70–Cys-102, Cys-81–Cys-83, Cys-81–Cys-95, Cys-87–Cys-94, and Cys-95–Cys-102. Residues Asn-175, Asn-314, Asn-360, and Asn-455 are each glycosylated (N-linked (GlcNAc...) asparagine).

The protein belongs to the peptidase C1 family. It has been suggested that the active SMB domain may be permitted considerable disulfide bond heterogeneity or variability, thus 2 alternate disulfide patterns based on 3D structures are described with 1 disulfide bond conserved in both. As to expression, expressed in the kidney cortex, small intestine and cornea.

The protein resides in the secreted. The protein localises to the extracellular space. It localises to the extracellular matrix. Its subcellular location is the basement membrane. Functionally, mediates adhesion of proximal tubule epithelial cells via integrins alpha3-beta1 and alphaV-beta3. This is a non catalytic peptidase C1 family protein. This Homo sapiens (Human) protein is Tubulointerstitial nephritis antigen (TINAG).